We begin with the raw amino-acid sequence, 421 residues long: Probable indole-3-pyruvate monooxygenase YUCCA9 (421 aa).

29–34 (GAGPSG) serves as a coordination point for FAD. 196-201 (GCGNSG) lines the NADP(+) pocket.

The protein belongs to the FMO family. It depends on FAD as a cofactor.

The enzyme catalyses indole-3-pyruvate + NADPH + O2 + H(+) = (indol-3-yl)acetate + CO2 + NADP(+) + H2O. Its pathway is plant hormone metabolism; auxin biosynthesis. Its function is as follows. Involved in auxin biosynthesis. Belongs to the set of redundant YUCCA genes probably responsible for auxin biosynthesis in roots. The chain is Probable indole-3-pyruvate monooxygenase YUCCA9 (YUC9) from Arabidopsis thaliana (Mouse-ear cress).